The primary structure comprises 364 residues: Capsular polysaccharide phosphotransferase cps1A (364 aa).

It belongs to the stealth family.

Its function is as follows. Part of a capsular polysaccharide synthesis locus. This chain is Capsular polysaccharide phosphotransferase cps1A (cps1A), found in Actinobacillus pleuropneumoniae (Haemophilus pleuropneumoniae).